A 294-amino-acid polypeptide reads, in one-letter code: 2,4-diacetylphloroglucinol hydrolase (294 aa).

Positions 129, 160, 270, and 274 each coordinate Zn(2+).

It belongs to the DAPG/phloretin hydrolase family. Homodimer. Zn(2+) is required as a cofactor.

It carries out the reaction 2,4-diacetylphloroglucinol + H2O = 2-acetylphloroglucinol + acetate. With respect to regulation, specifically and significantly activated by CoCl(2). Competitively inhibited by MAPG, but not by 2-hydroxy- and 4-hydroxyacetophenone. Hydrolase that specifically degrades the potent antimicrobial compound 2,4-diacetylphloroglucinol (DAPG) to equimolar amounts of mildly toxic monoacetylphloroglucinol (MAPG) and acetate. The protein is 2,4-diacetylphloroglucinol hydrolase of Pseudomonas sp.